Consider the following 309-residue polypeptide: Mitochondrial import receptor subunit TOM34 (309 aa).

S8 bears the Phosphoserine mark. TPR repeat units follow at residues V9–Q42, S51–S84, and K86–V118. Phosphoserine is present on S160. Residues L161–D189 form a disordered region. Basic and acidic residues predominate over residues E164 to T178. S186 bears the Phosphoserine mark. TPR repeat units follow at residues A193–E226, S227–N260, and K262–N294. Residue K197 forms a Glycyl lysine isopeptide (Lys-Gly) (interchain with G-Cter in SUMO2) linkage.

It belongs to the Tom34 family. As to quaternary structure, interacts with HSP90A, VCP, ATP6V1D, KIAA0665, AMPK, and DMAP1 through its TPR repeat. As to expression, ubiquitous.

Its subcellular location is the cytoplasm. The protein localises to the mitochondrion outer membrane. In terms of biological role, plays a role in the import of cytosolically synthesized preproteins into mitochondria. Binds the mature portion of precursor proteins. Interacts with cellular components, and possesses weak ATPase activity. May be a chaperone-like protein that helps to keep newly synthesized precursors in an unfolded import compatible state. The sequence is that of Mitochondrial import receptor subunit TOM34 (TOMM34) from Homo sapiens (Human).